We begin with the raw amino-acid sequence, 532 residues long: Cytochrome P450 monooxygenase criE (532 aa).

Residues V18–L38 traverse the membrane as a helical segment. Residue C441 participates in heme binding.

The protein belongs to the cytochrome P450 family. Heme is required as a cofactor.

It localises to the membrane. It catalyses the reaction preechinulin + reduced [NADPH--hemoprotein reductase] + O2 = neoechinulin A + oxidized [NADPH--hemoprotein reductase] + 2 H2O + H(+). The protein operates within secondary metabolite biosynthesis. It participates in alkaloid biosynthesis. Cytochrome P450 monooxygenase; part of the gene cluster that mediates the biosynthesis of echinulin family alkaloid. The pathway begins with the biosynthesis of the cyclic dipeptide cyclo-L-Trp-L-Ala (cyclo-TA) by the NRPS criC via condensation of L-alanine and L-tryptophan. The prenyltransferase criA then catalyzes the first prenylation step, a reverse prenylation reaction at C2, to yield preechinulin. Preechinulin is the substrate of the cytochrome P450 monooxygenase criE that catalyzes the formation of the double bond between C10 and C11 to produce neoechulin A. The unique prenyltransferase criF functions as a competitive enzyme with criE for preechinulin metabolization and uses preechinulin for effective regiospecific prenylations. Preechinulin is prenylated by criF at C5 or C7. C7-prenylation leads to accumulation of tardioxopiperazine B without further modification by criF. In contrast, the C5-prenylated tardioxopiperazine A can be prenylated again by criF, predominantly at C7 to form echinulin or less frequently at C4 to give variecolorin L. CriF also accepts neoechilunin A to produce varlecolorin G (prenylation at C5) or isoechinulin A (prenylation at C7). CriF further converts isoechinulin A into dehydroechinulin. Moreover, a yet unidentified enzyme can also convert neoechilunin A into neoechilunin B by introducing a double bond between positions C14 and C17 and thus provides a further substrate to criF for C5 and C7 prenylation. This chain is Cytochrome P450 monooxygenase criE, found in Aspergillus cristatus (Chinese Fuzhuan brick tea-fermentation fungus).